The following is a 400-amino-acid chain: Tryptophan synthase beta chain (400 aa).

At K92 the chain carries N6-(pyridoxal phosphate)lysine.

The protein belongs to the TrpB family. As to quaternary structure, tetramer of two alpha and two beta chains. It depends on pyridoxal 5'-phosphate as a cofactor.

The enzyme catalyses (1S,2R)-1-C-(indol-3-yl)glycerol 3-phosphate + L-serine = D-glyceraldehyde 3-phosphate + L-tryptophan + H2O. It participates in amino-acid biosynthesis; L-tryptophan biosynthesis; L-tryptophan from chorismate: step 5/5. The beta subunit is responsible for the synthesis of L-tryptophan from indole and L-serine. The polypeptide is Tryptophan synthase beta chain (Leptospira borgpetersenii serovar Hardjo-bovis (strain JB197)).